Consider the following 183-residue polypeptide: 2-C-methyl-D-erythritol 2,4-cyclodiphosphate synthase (183 aa).

Residues D10 and H12 each contribute to the a divalent metal cation site. 4-CDP-2-C-methyl-D-erythritol 2-phosphate contacts are provided by residues 10–12 (DVH) and 38–39 (HS). H46 contributes to the a divalent metal cation binding site. 4-CDP-2-C-methyl-D-erythritol 2-phosphate-binding positions include 60 to 62 (DIG) and 65 to 69 (FPDTD).

It belongs to the IspF family. As to quaternary structure, homotrimer. A divalent metal cation serves as cofactor.

The catalysed reaction is 4-CDP-2-C-methyl-D-erythritol 2-phosphate = 2-C-methyl-D-erythritol 2,4-cyclic diphosphate + CMP. It functions in the pathway isoprenoid biosynthesis; isopentenyl diphosphate biosynthesis via DXP pathway; isopentenyl diphosphate from 1-deoxy-D-xylulose 5-phosphate: step 4/6. Involved in the biosynthesis of isopentenyl diphosphate (IPP) and dimethylallyl diphosphate (DMAPP), two major building blocks of isoprenoid compounds. Catalyzes the conversion of 4-diphosphocytidyl-2-C-methyl-D-erythritol 2-phosphate (CDP-ME2P) to 2-C-methyl-D-erythritol 2,4-cyclodiphosphate (ME-CPP) with a corresponding release of cytidine 5-monophosphate (CMP). The sequence is that of 2-C-methyl-D-erythritol 2,4-cyclodiphosphate synthase from Verminephrobacter eiseniae (strain EF01-2).